The sequence spans 58 residues: MSKFYKIWMIFDPRRVFVAQGVFLFLLAVMIHLILLSTPSYNWLEISAAKYNRVAVAE.

Residues 1-15 (MSKFYKIWMIFDPRR) lie on the Cytoplasmic side of the membrane. A helical membrane pass occupies residues 16–36 (VFVAQGVFLFLLAVMIHLILL). A bacteriochlorophyll is bound at residue H32. Topologically, residues 37-58 (STPSYNWLEISAAKYNRVAVAE) are periplasmic.

This sequence belongs to the antenna complex alpha subunit family. As to quaternary structure, the core complex is formed by different alpha and beta chains, binding bacteriochlorophyll molecules, and arranged most probably in tetrameric structures disposed around the reaction center. The non-pigmented gamma chains may constitute additional components.

It localises to the cell inner membrane. Functionally, antenna complexes are light-harvesting systems, which transfer the excitation energy to the reaction centers. The protein is Light-harvesting protein B-875 alpha chain (pufA) of Cereibacter sphaeroides (strain ATCC 17023 / DSM 158 / JCM 6121 / CCUG 31486 / LMG 2827 / NBRC 12203 / NCIMB 8253 / ATH 2.4.1.) (Rhodobacter sphaeroides).